We begin with the raw amino-acid sequence, 109 residues long: Hainantoxin-XVIII-4 (109 aa).

The signal sequence occupies residues 1–18 (MKLSIIIIATSLVIAVVA). A propeptide spanning residues 19–46 (FPSKDSKAIENDKTEQRMEIVVQETARA) is cleaved from the precursor. 3 cysteine pairs are disulfide-bonded: Cys55/Cys68, Cys59/Cys108, and Cys61/Cys81.

The protein belongs to the neurotoxin 25 family. F7 subfamily. Expressed by the venom gland.

The protein localises to the secreted. Functionally, putative ion channel inhibitor. This Cyriopagopus hainanus (Chinese bird spider) protein is Hainantoxin-XVIII-4.